We begin with the raw amino-acid sequence, 466 residues long: 3-isopropylmalate dehydratase large subunit (466 aa).

Positions 347, 407, and 410 each coordinate [4Fe-4S] cluster.

It belongs to the aconitase/IPM isomerase family. LeuC type 1 subfamily. Heterodimer of LeuC and LeuD. Requires [4Fe-4S] cluster as cofactor.

The enzyme catalyses (2R,3S)-3-isopropylmalate = (2S)-2-isopropylmalate. It participates in amino-acid biosynthesis; L-leucine biosynthesis; L-leucine from 3-methyl-2-oxobutanoate: step 2/4. Catalyzes the isomerization between 2-isopropylmalate and 3-isopropylmalate, via the formation of 2-isopropylmaleate. In Buchnera aphidicola subsp. Diuraphis noxia, this protein is 3-isopropylmalate dehydratase large subunit.